The sequence spans 371 residues: L-lysine 4-hydroxylase (371 aa).

Fe cation-binding residues include histidine 174, glutamate 176, and histidine 310.

Belongs to the clavaminate synthase family. Fe(2+) is required as a cofactor.

It carries out the reaction L-lysine + 2-oxoglutarate + O2 = (4R)-4-hydroxy-L-lysine + succinate + CO2. Functionally, alpha-ketoglutarate-dependent dioxygenase that in vitro catalyzes the regio- and stereoselective hydroxylation of L-lysine, leading to (4R)-4-hydroxy-L-lysine. This is L-lysine 4-hydroxylase from Niastella koreensis (strain DSM 17620 / KACC 11465 / NBRC 106392 / GR20-10).